A 510-amino-acid polypeptide reads, in one-letter code: GMP synthase [glutamine-hydrolyzing] (510 aa).

Residues 5 to 195 (LVLVVDFGGQ…LFNVCNLKGD (191 aa)) form the Glutamine amidotransferase type-1 domain. Catalysis depends on Cys82, which acts as the Nucleophile. Catalysis depends on residues His169 and Glu171. The GMPS ATP-PPase domain occupies 196 to 385 (WSMSSFAEQQ…LGIPHKLVWR (190 aa)). 223–229 (SGGVDSS) lines the ATP pocket.

In terms of assembly, homodimer.

The catalysed reaction is XMP + L-glutamine + ATP + H2O = GMP + L-glutamate + AMP + diphosphate + 2 H(+). The protein operates within purine metabolism; GMP biosynthesis; GMP from XMP (L-Gln route): step 1/1. Catalyzes the synthesis of GMP from XMP. This is GMP synthase [glutamine-hydrolyzing] from Clostridium botulinum (strain Kyoto / Type A2).